Reading from the N-terminus, the 239-residue chain is Ribonuclease PH (239 aa).

Residues Arg86 and 124-126 (GTR) each bind phosphate.

This sequence belongs to the RNase PH family. In terms of assembly, homohexameric ring arranged as a trimer of dimers.

It catalyses the reaction tRNA(n+1) + phosphate = tRNA(n) + a ribonucleoside 5'-diphosphate. In terms of biological role, phosphorolytic 3'-5' exoribonuclease that plays an important role in tRNA 3'-end maturation. Removes nucleotide residues following the 3'-CCA terminus of tRNAs; can also add nucleotides to the ends of RNA molecules by using nucleoside diphosphates as substrates, but this may not be physiologically important. Probably plays a role in initiation of 16S rRNA degradation (leading to ribosome degradation) during starvation. The chain is Ribonuclease PH from Sinorhizobium medicae (strain WSM419) (Ensifer medicae).